Consider the following 425-residue polypeptide: Phosphomethylpyrimidine synthase (425 aa).

Residues M94, Y123, H162, S184–G186, N225–R228, and E264 each bind substrate. Position 268 (H268) interacts with Zn(2+). Y291 contributes to the substrate binding site. A Zn(2+)-binding site is contributed by H332. The [4Fe-4S] cluster site is built by C407, C410, and C414.

It belongs to the ThiC family. Requires [4Fe-4S] cluster as cofactor.

The catalysed reaction is 5-amino-1-(5-phospho-beta-D-ribosyl)imidazole + S-adenosyl-L-methionine = 4-amino-2-methyl-5-(phosphooxymethyl)pyrimidine + CO + 5'-deoxyadenosine + formate + L-methionine + 3 H(+). Its pathway is cofactor biosynthesis; thiamine diphosphate biosynthesis. Functionally, catalyzes the synthesis of the hydroxymethylpyrimidine phosphate (HMP-P) moiety of thiamine from aminoimidazole ribotide (AIR) in a radical S-adenosyl-L-methionine (SAM)-dependent reaction. In Methanoregula boonei (strain DSM 21154 / JCM 14090 / 6A8), this protein is Phosphomethylpyrimidine synthase.